Reading from the N-terminus, the 186-residue chain is Protein C (186 aa).

Residues 1-15 (MSKTDWNASGLSRPS) show a composition bias toward polar residues. The tract at residues 1-44 (MSKTDWNASGLSRPSPSAHWPSRKLWQHGQKYQTTQDRSEPPAG) is disordered.

Belongs to the morbillivirus protein C family. In terms of assembly, interacts with the phosphoprotein (via C-terminus); this interaction allows C to associate with the ribonucleocapsid.

The protein localises to the host nucleus. The protein resides in the host cytoplasmic vesicle. Its function is as follows. Ribonucleocapsid-associated protein that interacts with the phosphoprotein (P), thereby increasing replication accuracy and processivity of the polymerase complex. This is Protein C (P/V/C) from Homo sapiens (Human).